Reading from the N-terminus, the 897-residue chain is Valine--tRNA ligase (897 aa).

A 'HIGH' region motif is present at residues 46–56; that stretch reads PNVTGSLHMGH. A 'KMSKS' region motif is present at residues 532 to 536; it reads KMSKT. Lys-535 contacts ATP. Residues 839 to 897 are a coiled coil; it reads LRRSLEKLDKESGVLAARLDNASYLANAPAELVTESRAKLAEQRAQAAILAEQLARLEN.

Belongs to the class-I aminoacyl-tRNA synthetase family. ValS type 1 subfamily. Monomer.

It localises to the cytoplasm. The enzyme catalyses tRNA(Val) + L-valine + ATP = L-valyl-tRNA(Val) + AMP + diphosphate. Its function is as follows. Catalyzes the attachment of valine to tRNA(Val). As ValRS can inadvertently accommodate and process structurally similar amino acids such as threonine, to avoid such errors, it has a 'posttransfer' editing activity that hydrolyzes mischarged Thr-tRNA(Val) in a tRNA-dependent manner. This Gloeobacter violaceus (strain ATCC 29082 / PCC 7421) protein is Valine--tRNA ligase.